Here is a 75-residue protein sequence, read N- to C-terminus: Protease B inhibitor 2 (75 aa).

Phosphothreonine is present on T74.

The protein belongs to the protease inhibitor I9 family. In terms of assembly, part of the heterodimeric LMA1 complex together with the thioredoxin II/TRX2. LMA1 binds to the ATPase SEC18.

Its subcellular location is the cytoplasm. In terms of biological role, cytosolic inhibitor of vacuolar proteinase B (yscB), probably regulating protease B activity during limited proteolysis. PBI2 is a component of the LMA1 complex, which is involved in the facilitation of vesicle fusion such as homotypic vacuole and ER-derived COPII vesicle fusion with the Golgi. This Saccharomyces cerevisiae (strain ATCC 204508 / S288c) (Baker's yeast) protein is Protease B inhibitor 2 (PBI2).